The following is a 1439-amino-acid chain: ABC transporter G family member 14 (1439 aa).

Residues 1 to 17 (MEENSNKFEQELKEIGQ) are compositionally biased toward basic and acidic residues. The segment at 1–21 (MEENSNKFEQELKEIGQDRNQ) is disordered. One can recognise an ABC transporter 1 domain in the interval 117–370 (FSILNFFKPS…FMSLGFDCEP (254 aa)). The ABC transmembrane type-2 1 domain occupies 475-700 (LNDKFGLFTK…GSEFDAYRIC (226 aa)). 6 consecutive transmembrane segments (helical) span residues 479 to 499 (FGLF…SSVF), 516 to 536 (ILSA…MTFI), 564 to 584 (IPFT…MFGL), 589 to 609 (GKFF…TALF), 614 to 634 (YLCP…IFML), and 734 to 754 (IIVY…MEYI). The ABC transporter 2 domain occupies 805 to 1049 (FTWQNIRYTV…LTSYFERHGV (245 aa)). 841–848 (GSSGAGKT) serves as a coordination point for ATP. The 226-residue stretch at 1141 to 1366 (YYTYGSFVQS…YNTCQNYTSA (226 aa)) folds into the ABC transmembrane type-2 2 domain. 6 helical membrane passes run 1144–1164 (YGSF…FWNL), 1175–1195 (IFFI…VMPQ), 1217–1237 (FAIS…TIFF), 1256–1276 (FYFW…GQAV), 1283–1303 (MFFA…FSGV), and 1413–1433 (VGII…FVYL).

It belongs to the ABC transporter superfamily. ABCG family. PDR (TC 3.A.1.205) subfamily.

The protein resides in the membrane. The chain is ABC transporter G family member 14 (abcG14) from Dictyostelium discoideum (Social amoeba).